Reading from the N-terminus, the 260-residue chain is Thiamine thiazole synthase (260 aa).

Residues Ser41, Glu60 to Arg61, Gly68, Val131, and His159 to Asp161 each bind NAD(+). Residues Asp161 and His176 each coordinate Fe cation. Met225 contacts NAD(+). Arg235 provides a ligand contact to glycine.

It belongs to the THI4 family. As to quaternary structure, homooctamer; tetramer of dimers. It depends on Fe(2+) as a cofactor.

It carries out the reaction hydrogen sulfide + glycine + NAD(+) = ADP-5-ethyl-4-methylthiazole-2-carboxylate + nicotinamide + 3 H2O + H(+). It functions in the pathway cofactor biosynthesis; thiamine diphosphate biosynthesis. Involved in the biosynthesis of the thiazole moiety of thiamine. Catalyzes the conversion of NAD and glycine to adenosine diphosphate 5-(2-hydroxyethyl)-4-methylthiazole-2-carboxylate (ADT), an adenylated thiazole intermediate, using free sulfide as a source of sulfur. The protein is Thiamine thiazole synthase of Archaeoglobus fulgidus (strain ATCC 49558 / DSM 4304 / JCM 9628 / NBRC 100126 / VC-16).